We begin with the raw amino-acid sequence, 491 residues long: Anthranilate synthase component 1 (491 aa).

Residues Ser49 and Pro271 to Leu273 contribute to the L-tryptophan site. Position 306-307 (Gly306–Thr307) interacts with chorismate. Mg(2+) is bound at residue Glu333. Residues Tyr421, Arg441, Gly455 to Gly457, and Gly457 contribute to the chorismate site. A Mg(2+)-binding site is contributed by Glu470.

Belongs to the anthranilate synthase component I family. In terms of assembly, heterotetramer consisting of two non-identical subunits: a beta subunit (TrpG) and a large alpha subunit (TrpE). Mg(2+) is required as a cofactor.

It carries out the reaction chorismate + L-glutamine = anthranilate + pyruvate + L-glutamate + H(+). It functions in the pathway amino-acid biosynthesis; L-tryptophan biosynthesis; L-tryptophan from chorismate: step 1/5. Its activity is regulated as follows. Feedback inhibited by tryptophan. Part of a heterotetrameric complex that catalyzes the two-step biosynthesis of anthranilate, an intermediate in the biosynthesis of L-tryptophan. In the first step, the glutamine-binding beta subunit (TrpG) of anthranilate synthase (AS) provides the glutamine amidotransferase activity which generates ammonia as a substrate that, along with chorismate, is used in the second step, catalyzed by the large alpha subunit of AS (TrpE) to produce anthranilate. In the absence of TrpG, TrpE can synthesize anthranilate directly from chorismate and high concentrations of ammonia. The polypeptide is Anthranilate synthase component 1 (trpE) (Neisseria meningitidis serogroup A / serotype 4A (strain DSM 15465 / Z2491)).